Here is a 543-residue protein sequence, read N- to C-terminus: UBP9-binding protein bun62 (543 aa).

Ser-43 carries the phosphoserine modification. WD repeat units lie at residues 239-279, 320-361, 362-401, 404-448, and 513-542; these read LNSS…QPLH, FSKS…DVFH, SYFAGLTCVTWSPDGKFIAIGGKDDLVSIYSFPLRKLVAR, GHKS…IHRP, and VDDSPLSSVFFDPDCMITCATNGRIRTWQR.

In terms of assembly, interacts with ubp9 and bun107.

The protein localises to the nucleus. It is found in the cytoplasm. The protein resides in the cell tip. Functionally, required for the ubp9 recruitment to septa and cell tips but also for its enzymatic activity at these specific locations. This is UBP9-binding protein bun62 (bun62) from Schizosaccharomyces pombe (strain 972 / ATCC 24843) (Fission yeast).